The chain runs to 1296 residues: MDSVIESEEGLKVDSPNRADAETSNSKIHEEDEKELKTESDLKEEKKKTEKNKQEEDEKTKTVPFHKLFAFADSFDIILMILGTIGAVGNGLGFPIMTILFGDVIDVFGQNQNSSDVSDKIAKVALKFVYLGLGTLVAALLQVSGWMISGERQAGRIRSLYLQTILRQDIAFFDVETNTGEVVGRMSGDTVLIQDAMGEKVGKAIQLVSTFIGGFVIAFTEGWLLTLVMVSSIPLLVMSGAALAIVISKMASRGQTSYAKAAVVVEQTVGSIRTVASFTGEKQAISNYNKHLVSAYRAGVFEGASTGLGLGTLNIVIFCTYALAVWYGGKMILEKGYTGGQVLIIIFAVLTGSMSLGQASPCLSAFAAGQAAAYKMFEAIKRKPEIDASDTTGKVLDDIRGDIELNNVNFSYPARPEEQIFRGFSLSISSGSTVALVGQSGSGKSTVVSLIERFYDPQSGEVRIDGINLKEFQLKWIRSKIGLVSQEPVLFTSSIKENIAYGKENATVEEIRKATELANASKFIDKLPQGLDTMVGEHGTQLSGGQKQRIAVARAILKDPRILLLDEATSALDAESERIVQEALDRIMVNRTTVVVAHRLSTVRNADMIAVIHQGKIVEKGSHSELLRDPEGAYSQLIRLQEDTKQTEDSTDEQKLSMESMKRSSLRKSSLSRSLSKRSSSFSMFGFPAGIDTNNEAIPEKDIKVSTPIKEKKVSFFRVAALNKPEIPMLILGSIAAVLNGVILPIFGILISSVIKAFFKPPEQLKSDTRFWAIIFMLLGVASMVVFPAQTIFFSIAGCKLVQRIRSMCFEKVVRMEVGWFDETENSSGAIGARLSADAATVRGLVGDALAQTVQNLASVTAGLVIAFVASWQLAFIVLAMLPLIGLNGYIYMKFMVGFSADAKRMYEEASQVANDAVGSIRTVASFCAEEKVMKMYKKKCEGPMRTGIRQGIVSGIGFGVSFFVLFSSYAASFYAGARLVDDGKTTFDSVFRVFFALTMAAVAISQSSSLSPDSSKASNAAASIFAVIDRESKIDPSDESGRVLDNVKGDIELRHISFKYPSRPDVQIFQDLCLSIRAGKTIALVGESGSGKSTVIALLQRFYDPDSGQITLDGVEIKTLQLKWLRQQTGLVSQEPVLFNETIRANIAYGKGGDATETEIVSAAELSNAHGFISGLQQGYDTMVGERGVQLSGGQKQRVAIARAIVKDPKVLLLDEATSALDAESERVVQDALDRVMVNRTTVVVAHRLSTIKNADVIAVVKNGVIVEKGKHETLINIKDGVYASLVQLHLSAST.

Residues 1-59 (MDSVIESEEGLKVDSPNRADAETSNSKIHEEDEKELKTESDLKEEKKKTEKNKQEEDEK) are disordered. The span at 9–59 (EGLKVDSPNRADAETSNSKIHEEDEKELKTESDLKEEKKKTEKNKQEEDEK) shows a compositional bias: basic and acidic residues. A helical transmembrane segment spans residues 77–97 (IILMILGTIGAVGNGLGFPIM). In terms of domain architecture, ABC transmembrane type-1 1 spans 80 to 368 (MILGTIGAVG…ASPCLSAFAA (289 aa)). An N-linked (GlcNAc...) asparagine glycan is attached at N113. A run of 5 helical transmembrane segments spans residues 128-148 (FVYLGLGTLVAALLQVSGWMI), 205-225 (IQLVSTFIGGFVIAFTEGWLL), 227-247 (LVMVSSIPLLVMSGAALAIVI), 307-327 (GLGLGTLNIVIFCTYALAVWY), and 336-356 (GYTGGQVLIIIFAVLTGSMSL). The region spanning 403–639 (IELNNVNFSY…PEGAYSQLIR (237 aa)) is the ABC transporter 1 domain. N-linked (GlcNAc...) asparagine glycosylation is present at N409. An ATP-binding site is contributed by 438–445 (GQSGSGKS). N-linked (GlcNAc...) asparagine glycosylation is found at N505, N519, and N590. The span at 640–662 (LQEDTKQTEDSTDEQKLSMESMK) shows a compositional bias: basic and acidic residues. Residues 640 to 672 (LQEDTKQTEDSTDEQKLSMESMKRSSLRKSSLS) form a disordered region. A phosphoserine mark is found at S657 and S660. An ABC transmembrane type-1 2 domain is found at 730-1017 (LILGSIAAVL…SSSLSPDSSK (288 aa)). Helical transmembrane passes span 731–751 (ILGSIAAVLNGVILPIFGILI) and 774–794 (IIFMLLGVASMVVFPAQTIFF). An N-linked (GlcNAc...) asparagine glycan is attached at N826. The next 3 membrane-spanning stretches (helical) occupy residues 865-885 (VIAFVASWQLAFIVLAMLPLI), 952-972 (GIVSGIGFGVSFFVLFSSYAA), and 986-1006 (TTFDSVFRVFFALTMAAVAIS). In terms of domain architecture, ABC transporter 2 spans 1052–1289 (IELRHISFKY…KDGVYASLVQ (238 aa)). Position 1087–1094 (1087–1094 (GESGSGKS)) interacts with ATP. N-linked (GlcNAc...) asparagine glycosylation is found at N1141 and N1240.

Belongs to the ABC transporter superfamily. ABCB family. Multidrug resistance exporter (TC 3.A.1.201) subfamily.

Its subcellular location is the membrane. The polypeptide is ABC transporter B family member 21 (ABCB21) (Arabidopsis thaliana (Mouse-ear cress)).